Here is a 304-residue protein sequence, read N- to C-terminus: Bifunctional phosphoglucose/phosphomannose isomerase (304 aa).

One can recognise an SIS domain in the interval 16-147; that stretch reads FDKSFKVGKY…KPKIGDVDEA (132 aa). The D-fructose 6-phosphate site is built by Gly-35, Ser-36, Ser-74, Ser-76, Thr-79, and Arg-122. Glu-196 acts as the Proton acceptor in catalysis. D-fructose 6-phosphate is bound by residues His-212 and Lys-300. Catalysis depends on His-212, which acts as the Proton donor. Lys-300 acts as the Proton acceptor in catalysis.

Belongs to the PGI/PMI family. In terms of assembly, homodimer.

It catalyses the reaction alpha-D-glucose 6-phosphate = beta-D-fructose 6-phosphate. It carries out the reaction D-mannose 6-phosphate = D-fructose 6-phosphate. Dual specificity isomerase that catalyzes the isomerization of both glucose-6-phosphate and mannose-6-phosphate to fructose-6-phosphate. The sequence is that of Bifunctional phosphoglucose/phosphomannose isomerase from Thermoplasma volcanium (strain ATCC 51530 / DSM 4299 / JCM 9571 / NBRC 15438 / GSS1).